We begin with the raw amino-acid sequence, 357 residues long: Tetraacyldisaccharide 4'-kinase (357 aa).

67-74 (SVGGTGKT) serves as a coordination point for ATP.

The protein belongs to the LpxK family.

It carries out the reaction a lipid A disaccharide + ATP = a lipid IVA + ADP + H(+). Its pathway is glycolipid biosynthesis; lipid IV(A) biosynthesis; lipid IV(A) from (3R)-3-hydroxytetradecanoyl-[acyl-carrier-protein] and UDP-N-acetyl-alpha-D-glucosamine: step 6/6. Transfers the gamma-phosphate of ATP to the 4'-position of a tetraacyldisaccharide 1-phosphate intermediate (termed DS-1-P) to form tetraacyldisaccharide 1,4'-bis-phosphate (lipid IVA). The chain is Tetraacyldisaccharide 4'-kinase from Syntrophotalea carbinolica (strain DSM 2380 / NBRC 103641 / GraBd1) (Pelobacter carbinolicus).